We begin with the raw amino-acid sequence, 572 residues long: DnaJ protein ERDJ3A (572 aa).

Positions 1-23 (MVRTRLAISVVLVSTLLLLNVKA) are cleaved as a signal peptide. In terms of domain architecture, J spans 27-91 (DPYKVLGVSK…EKRKNYDLYG (65 aa)). Residues 394-423 (ITVKNLKSAVQELGKLLEGLEKKNKKVSSK) are a coiled coil. A disordered region spans residues 419 to 439 (KVSSKSQAGQAPNESSEKIPL). A compositionally biased stretch (polar residues) spans 422 to 432 (SKSQAGQAPNE). Asn431 carries an N-linked (GlcNAc...) asparagine glycan.

In terms of assembly, interacts with BIP1 and BIP3. The interaction with BIP1 and BIP3 activates the ATPase enzyme activities of BIP1 and BIP3. In terms of processing, not N-glycosylated. In terms of tissue distribution, expressed in roots, leaves, stems, flowers, mature pollen grains and growing pollen tubes.

It localises to the endoplasmic reticulum lumen. In terms of biological role, regulates protein folding in the endoplasmic reticulum (ER) lumen. Functions probably as a co-molecular chaperone that is required for normal growth of pollen tubes under high-temperature stress. The chain is DnaJ protein ERDJ3A (ERDJ3A) from Arabidopsis thaliana (Mouse-ear cress).